The sequence spans 453 residues: Glutamyl-tRNA(Gln) amidotransferase subunit A (453 aa).

Active-site charge relay system residues include K53 and S128. The Acyl-ester intermediate role is filled by S152.

Belongs to the amidase family. GatA subfamily. In terms of assembly, heterotrimer of A, B and C subunits.

It carries out the reaction L-glutamyl-tRNA(Gln) + L-glutamine + ATP + H2O = L-glutaminyl-tRNA(Gln) + L-glutamate + ADP + phosphate + H(+). Allows the formation of correctly charged Gln-tRNA(Gln) through the transamidation of misacylated Glu-tRNA(Gln) in organisms which lack glutaminyl-tRNA synthetase. The reaction takes place in the presence of glutamine and ATP through an activated gamma-phospho-Glu-tRNA(Gln). This Helicobacter pylori (strain P12) protein is Glutamyl-tRNA(Gln) amidotransferase subunit A.